The chain runs to 899 residues: MGRSLTCPFGISPACGAQASWSIFGVGTAEVPGTHSHSNQAAAMPHIPEDEEPPGEPQAAQTQDSPSAGPFPSPPTIVLTGDASSPEGETDKNLVNRAPSPHRRLSHRHLKVSTASLTSVDPSGHVIDLVNDQLPDISISEEDKKKNLALLEEAKLVSERFLTRRGRKSRSSLGDSPSAVSPNLSSGASPASSRSCSLTISTSPGLDICSGPQSPLPGAPPQQKGHEDGVSSPCPGEPNVSKGLADLKQNDQRKVSQGRLAPRSPTVEKTKELTVEQKENFDPLQHVEATPMAQASGASISGKMALNSPQPGPAEMELGRQLLKTAREGNPLPRTTAQGSGGTVSPHSLGQGSAGEPMGPKAGSKAELRSPVSRPPLIRGVSWDSSPEEPGPLLQKVLAKLPLAEEEKRFPGKAKPAKPPGLKDFQIQVQPVRMQKLTKLREEHILMRNQNLVGFKLPELSEAAEQDKGVSPELAPAAEEEESKSGLDVMPNISDILLRKLRVHKSLTGSAPPLTEKEVENVFVQLSLAFRNDSYTLESRINQAERERNLTEENTEKELENFKASITSSANIWYHCEHRETYQKLLEDIAVLHRLAARLSSRAEVVGAVRQEKRMSKATEVMMQYVENLKRTYEKDHAELMEFKKLANQNSSRSCGPSEDGVPRTARSMSLTMGKNMPRRRVSVAVVPKFNALNLPGQAPSSSPMPSLPALSESSNGKSSISVSPALPALLENGKTNAEANCEVGAPVPLPSCLEETSQETKAKAEEEAYSKGYQEGVKKTEELQDLKEEEEEEQKTESPEEPEEVEETQEDEKDQGSSKLEELVHFLQVMYPKLCQHWQVIWMMAAVMLVLSVVLGLYSSYNSCTEEADGPPGRSTCSAAQRDSWWSSGLQQELPAEQ.

Disordered stretches follow at residues 32–110 (PGTH…HRHL), 164–286 (RRGR…PLQH), 324–391 (KTAR…EEPG), and 463–486 (AAEQ…SKSG). The segment covering 100 to 110 (SPHRRLSHRHL) has biased composition (basic residues). At S106 the chain carries Phosphoserine. Positions 140 to 172 (SEEDKKKNLALLEEAKLVSERFLTRRGRKSRSS) are interaction with PRKG1. The span at 171-180 (SSLGDSPSAV) shows a compositional bias: polar residues. Positions 181 to 203 (SPNLSSGASPASSRSCSLTISTS) are enriched in low complexity. Positions 266–281 (TVEKTKELTVEQKENF) are enriched in basic and acidic residues. A compositionally biased stretch (polar residues) spans 333-351 (PRTTAQGSGGTVSPHSLGQ). S382 carries the phosphoserine modification. Positions 521–567 (NVFVQLSLAFRNDSYTLESRINQAERERNLTEENTEKELENFKASIT) are interaction with ITPR1. The stretch at 534–632 (SYTLESRINQ…MQYVENLKRT (99 aa)) forms a coiled coil. 2 positions are modified to phosphoserine: S670 and S683. Disordered stretches follow at residues 695–722 (LPGQ…SSIS) and 757–818 (TSQE…DQGS). Residues 699 to 715 (APSSSPMPSLPALSESS) show a composition bias toward low complexity. Basic and acidic residues-rich tracts occupy residues 759–770 (QETKAKAEEEAY) and 777–787 (GVKKTEELQDL). The span at 788–814 (KEEEEEEQKTESPEEPEEVEETQEDEK) shows a compositional bias: acidic residues. Residues 839–859 (WQVIWMMAAVMLVLSVVLGLY) traverse the membrane as a helical segment. Residues 867 to 899 (EEADGPPGRSTCSAAQRDSWWSSGLQQELPAEQ) form a disordered region. Positions 876-892 (STCSAAQRDSWWSSGLQ) are enriched in polar residues.

Part of cGMP kinase signaling complex at least composed of ACTA2/alpha-actin, CNN1/calponin H1, PLN/phospholamban, PRKG1 and ITPR1. Interacts with PRKG1/cGKI-beta and ITPR1/IP3R type I. Interacts with HCN4; regulates HCN4 channel activity. In terms of processing, phosphorylated by PRKG1/cGKI. In terms of tissue distribution, highly expressed in smooth muscle such as aorta, colon and uterus. Detected in the brain, in the thalamus, in the hippocampus and myenteric plexus. Highly expressed in megakaryocytes. Down-regulated during macrophage differentiation.

The protein localises to the membrane. The protein resides in the cytoplasm. It is found in the perinuclear region. Its subcellular location is the sarcoplasmic reticulum. Functionally, plays a role as NO/PRKG1-dependent regulator of IP3-induced calcium release; its phosphorylation by PRKG1 inhibits bradykinin and IP3-induced calcium release from intracellular stores. Recruits PRKG1 to the endoplasmic reticulum and may mediate the assembly of PRKG1 and ITPR1 in a macrocomplex. Involved in PRKG1 signaling cascade leading to inhibition of platelet activation and aggregation. Also mediates NO-dependent inhibition of calcium signaling in gastrointestinal smooth muscle contributing to NO-dependent relaxation. Plays a role in the regulation of cellular excitability by regulating the hyperpolarization-activated cyclic nucleotide-gated HCN4 channel activity. The chain is Inositol 1,4,5-triphosphate receptor associated 1 (Irag1) from Mus musculus (Mouse).